The primary structure comprises 233 residues: Adapter protein MecA (233 aa).

Belongs to the MecA family. In terms of assembly, homodimer.

Its function is as follows. Enables the recognition and targeting of unfolded and aggregated proteins to the ClpC protease or to other proteins involved in proteolysis. This chain is Adapter protein MecA, found in Lactococcus lactis subsp. lactis (strain IL1403) (Streptococcus lactis).